A 2052-amino-acid polypeptide reads, in one-letter code: Unconventional myosin-X (2052 aa).

Residue Met-1 is modified to N-acetylmethionine. Positions 63 to 739 (EGVDDMATLT…LEQKLEKRQE (677 aa)) constitute a Myosin motor domain. ATP contacts are provided by residues Asn-104, Tyr-113, 160–165 (GAGKTE), and Asn-215. Residues 619 to 641 (LHSLMATLSASNPFFVRCIKPNM) form an actin-binding region. IQ domains follow at residues 742 to 763 (VTRA…KQYK), 764 to 787 (KVLD…RFLH), and 788 to 817 (LKKA…EKRA). Positions 814-884 (EKRAEEEKRK…LSRELEKQKE (71 aa)) are SAH. Residues 819-843 (EEKRKREEEEKRKREEEERERERER) form a disordered region. The stretch at 885-935 (NKQVEEILRLEKEIEDLQRMKERQELSLTEASLQKLQQLRDEELRRLEDEA) forms a coiled coil. Residues Ser-963 and Ser-966 each carry the phosphoserine modification. The tract at residues 964–1093 (VGSGCTGEQG…DYDQDDYEDG (130 aa)) is disordered. The span at 988–1003 (PEEEEVDEGFEADDDA) shows a compositional bias: acidic residues. Positions 1040–1049 (VVPTSPSADS) are enriched in polar residues. Residues 1081–1092 (GDYDYDQDDYED) are compositionally biased toward acidic residues. Residue Thr-1152 is modified to Phosphothreonine. 2 consecutive PH domains span residues 1206–1304 (EALK…QVHA) and 1386–1491 (EFIV…NVTD). The MyTH4 domain maps to 1541–1689 (LPYGDINLNL…PSRDEIEALI (149 aa)). The FERM domain occupies 1694-2038 (MTSTVHCHGG…AYISMIVKKR (345 aa)).

This sequence belongs to the TRAFAC class myosin-kinesin ATPase superfamily. Myosin family. As to quaternary structure, monomer, when in an inactive conformation in the cytosol. Homodimer in its active, membrane-bound conformation; antiparallel coiled coil-mediated dimer formation. Interacts with ECPAS. Interacts with NEO 1. Interacts with VASP. Interacts with DCC and ITGB5; the presence of DCC inhibits ITGB5 binding. Interacts with tubulin; ITGB5 or DCC binding inhibits tubulin binding. Interacts strongly with CALM3 and weakly with CALM, the CALM3 interaction is essential for function in filopodial extension and motility. Interacts with ITGB1, ITGB3 and ITGB5. As to expression, detected in kidney, testis, liver, kidney, cerebellum and brain cortex (at protein level).

The protein resides in the cytoplasm. It is found in the cytosol. The protein localises to the cell projection. Its subcellular location is the lamellipodium. It localises to the ruffle. The protein resides in the cytoskeleton. It is found in the filopodium tip. The protein localises to the cell cortex. Its subcellular location is the filopodium membrane. Myosins are actin-based motor molecules with ATPase activity. Unconventional myosins serve in intracellular movements. MYO10 binds to actin filaments and actin bundles and functions as a plus end-directed motor. Moves with higher velocity and takes larger steps on actin bundles than on single actin filaments. The tail domain binds to membranous compartments containing phosphatidylinositol 3,4,5-trisphosphate, which are then moved relative to actin filaments. Regulates cell shape, cell spreading and cell adhesion. Stimulates the formation and elongation of filopodia. In hippocampal neurons it induces the formation of dendritic filopodia by trafficking the actin-remodeling protein VASP to the tips of filopodia, where it promotes actin elongation. Plays a role in formation of the podosome belt in osteoclasts. The sequence is that of Unconventional myosin-X (MYO10) from Bos taurus (Bovine).